The chain runs to 338 residues: MIRVAINGYGRIGRSILRAVYESAKRDRIQIVAINELAKPEAMLHLTQYDTTHGRFHTQVKLDEQHMIIGDDAIKLLHEPNPANLPWQEMDIDIVFEATGVINDRQACEAHIEAGARQVLISHPSSSDVDATIVYGVNQDLLKAEHTIVSNASCTTNCIVPVIDVLDRHFQVKSGAITTIHSAMNDQQVIDAYHDDLRRTRAAGQSIIPVDTKLARGIERILPHMKDKFEAISVRVPTINVTAIDLSVTLDKRVDIEQVNRVLKQATEGSFSGVVGYTNEPLVSCDFNHDPRSSIVDGTQTRVSDGHLVKLLLWCDNEWGFANRMLDTSLEMIKARRA.

11–12 (RI) contributes to the NAD(+) binding site. Residues 153–155 (SCT), R199, 212–213 (TK), and R235 contribute to the substrate site. C154 (nucleophile) is an active-site residue. Residue N317 coordinates NAD(+).

It belongs to the glyceraldehyde-3-phosphate dehydrogenase family. Epd subfamily. In terms of assembly, homotetramer.

It localises to the cytoplasm. The catalysed reaction is D-erythrose 4-phosphate + NAD(+) + H2O = 4-phospho-D-erythronate + NADH + 2 H(+). It participates in cofactor biosynthesis; pyridoxine 5'-phosphate biosynthesis; pyridoxine 5'-phosphate from D-erythrose 4-phosphate: step 1/5. Its function is as follows. Catalyzes the NAD-dependent conversion of D-erythrose 4-phosphate to 4-phosphoerythronate. The protein is D-erythrose-4-phosphate dehydrogenase of Shewanella piezotolerans (strain WP3 / JCM 13877).